The primary structure comprises 116 residues: Putative iron-sulfur cluster insertion protein ErpA (116 aa).

The iron-sulfur cluster site is built by C44, C108, and C110.

Belongs to the HesB/IscA family. Homodimer. It depends on iron-sulfur cluster as a cofactor.

Required for insertion of 4Fe-4S clusters. This chain is Putative iron-sulfur cluster insertion protein ErpA, found in Dechloromonas aromatica (strain RCB).